Reading from the N-terminus, the 459-residue chain is NADH oxidase (459 aa).

Residue asparagine 10 participates in FAD binding. The active-site Proton acceptor is histidine 11. FAD-binding residues include alanine 12, aspartate 34, glutamine 35, cysteine 44, valine 81, alanine 110, serine 113, lysine 143, and tyrosine 172. The active-site Redox-active is cysteine 44. Cysteine 44 carries the cysteine sulfinic acid (-SO2H) modification. The NAD(+) site is built by isoleucine 173, aspartate 192, tyrosine 201, and glycine 256. Aspartate 294 provides a ligand contact to FAD. Alanine 310 is a binding site for NAD(+). The FAD site is built by leucine 311, alanine 312, and serine 313. Glycine 341 is an NAD(+) binding site. Phenylalanine 439 lines the FAD pocket.

This sequence belongs to the class-III pyridine nucleotide-disulfide oxidoreductase family. FAD serves as cofactor.

Its subcellular location is the secreted. It localises to the cell wall. It carries out the reaction 2 NADH + O2 + 2 H(+) = 2 NAD(+) + 2 H2O. Functionally, catalyzes the four-electron reduction of molecular oxygen to water. Plays a role in redox balance maintenance. May be involved in mediating bacterial adhesion to host cells. May be considered a potential virulence factor. The polypeptide is NADH oxidase (Streptococcus pneumoniae (strain ATCC BAA-255 / R6)).